Consider the following 953-residue polypeptide: Zinc finger protein 507 (953 aa).

A Phosphoserine modification is found at S95. 3 consecutive C2H2-type zinc fingers follow at residues 125-147 (YQCS…IKQH), 155-185 (LMCS…ANIH), and 248-270 (YRCL…AWKH). A Phosphoserine modification is found at S427. A disordered region spans residues 470–489 (KGLATDENAPPGRRRTNSES). 5 C2H2-type zinc fingers span residues 641–663 (YRCR…LRVH), 669–691 (YQCP…MIHH), 697–720 (YQCK…REQH), 758–780 (YRCD…RRIH), and 786–808 (YRCS…MWKH). A disordered region spans residues 831–888 (GRVLGKSPGKTQLKSSEESADPVTGSSENAVSSSELMSQTPSEVLGTNENEKLSPTSN). The segment covering 854-888 (TGSSENAVSSSELMSQTPSEVLGTNENEKLSPTSN) has biased composition (polar residues). A C2H2-type 9 zinc finger spans residues 911 to 933 (FCCCICGFESTSKENLLDHMKEH).

The protein belongs to the krueppel C2H2-type zinc-finger protein family.

It is found in the nucleus. Its function is as follows. May be involved in transcriptional regulation. This Homo sapiens (Human) protein is Zinc finger protein 507 (ZNF507).